Consider the following 123-residue polypeptide: WAP four-disulfide core domain protein 5 (123 aa).

The signal sequence occupies residues 1–24 (MRIQSLLLLGVLLAVGSQLPAAFG). WAP domains follow at residues 27–73 (KGEK…CVPR) and 74–121 (ISVK…RDPA). Cystine bridges form between cysteine 34–cysteine 62, cysteine 41–cysteine 66, cysteine 49–cysteine 61, cysteine 55–cysteine 70, cysteine 81–cysteine 109, cysteine 88–cysteine 113, cysteine 96–cysteine 108, and cysteine 102–cysteine 117.

The protein resides in the secreted. In terms of biological role, putative acid-stable proteinase inhibitor. This chain is WAP four-disulfide core domain protein 5 (WFDC5), found in Callithrix jacchus (White-tufted-ear marmoset).